The chain runs to 317 residues: MENKIKVVFCGTPKIGADVLKALIEMNEVEVVLVISQPDKPIGRKKQIVYTPVKKLALENNLKVVQPNKIGEIYDDLAKLEFDFLITCAFGQFIPTKILKLAKTDSINFHGSLLPKLRGGAPIQYAIKNGDKKTGITIMQMVKQMDAGDYYVQESIDILDSDDSGSLFEKMGQLAYSMCKKYLVDIYNHKFELIKQNENEVTFCKNISSEEEKIDWNNTSLDIFNLIRSLSPSPISYTTINSQRYKIKSSKIINLDNQNKNVAPGTIIDINRQGIVVKTLDSSLLILEIQKEGKKMILASNYYLNKLSDLKISDKFD.

112 to 115 lines the (6S)-5,6,7,8-tetrahydrofolate pocket; it reads SLLP.

The protein belongs to the Fmt family.

The enzyme catalyses L-methionyl-tRNA(fMet) + (6R)-10-formyltetrahydrofolate = N-formyl-L-methionyl-tRNA(fMet) + (6S)-5,6,7,8-tetrahydrofolate + H(+). Its function is as follows. Attaches a formyl group to the free amino group of methionyl-tRNA(fMet). The formyl group appears to play a dual role in the initiator identity of N-formylmethionyl-tRNA by promoting its recognition by IF2 and preventing the misappropriation of this tRNA by the elongation apparatus. In Mycoplasma capricolum subsp. capricolum (strain California kid / ATCC 27343 / NCTC 10154), this protein is Methionyl-tRNA formyltransferase.